A 265-amino-acid polypeptide reads, in one-letter code: Zwei Ig domain protein zig-1 (265 aa).

A signal peptide spans 1-17 (MKNLLLITFFVVSTVTA). Residues 18 to 232 (LGGRGSKSAL…KMVDVRSEFQ (215 aa)) are Extracellular-facing. 2 Ig-like C2-type domains span residues 41–108 (HATD…TPHG) and 120–220 (PVVH…MLLV). Asn83 and Asn193 each carry an N-linked (GlcNAc...) asparagine glycan. Residues Cys155 and Cys202 are joined by a disulfide bond. A helical membrane pass occupies residues 233 to 253 (WVYPLAVILITIFLLVVIIVF). The Cytoplasmic segment spans residues 254–265 (CEWRNKKSTSKA).

As to expression, expressed in neurons and body wall muscles.

It is found in the cell membrane. In terms of biological role, probably not involved in maintaining the position of ASI and ASH head neuron cell bodies and ventral nerve cord axons of PVQ, PVP, RMEV, AVK and HSN neurons. This is Zwei Ig domain protein zig-1 from Caenorhabditis elegans.